A 506-amino-acid chain; its full sequence is Aminoaldehyde dehydrogenase 1b (506 aa).

Aspartate 102 contacts Na(+). Residues 162-164 (TPW) and 188-191 (KPSE) contribute to the NAD(+) site. Leucine 192 provides a ligand contact to Na(+). NAD(+) contacts are provided by residues 242 to 245 (SFET) and glutamate 263. The active-site Proton acceptor is glutamate 263. Cysteine 297 acts as the Nucleophile in catalysis. NAD(+) contacts are provided by glutamate 396 and tryptophan 462.

The protein belongs to the aldehyde dehydrogenase family.

It catalyses the reaction 4-aminobutanal + NAD(+) + H2O = 4-aminobutanoate + NADH + 2 H(+). The catalysed reaction is 3-aminopropanal + NAD(+) + H2O = beta-alanine + NADH + 2 H(+). It carries out the reaction 4-(trimethylamino)butanal + NAD(+) + H2O = 4-(trimethylamino)butanoate + NADH + 2 H(+). The enzyme catalyses 4-guanidinobutanal + NAD(+) + H2O = 4-guanidinobutanoate + NADH + 2 H(+). It catalyses the reaction betaine aldehyde + NAD(+) + H2O = glycine betaine + NADH + 2 H(+). The protein operates within amine and polyamine biosynthesis; betaine biosynthesis via choline pathway; betaine from betaine aldehyde: step 1/1. Dehydrogenase that catalyzes the oxidation of several aminoaldehydes. Metabolizes and detoxifies aldehyde products of polyamine degradation to non-toxic amino acids. Catalyzes the oxidation of 4-aminobutanal and 3-aminopropanal to 4-aminobutanoate and beta-alanine, respectively. Catalyzes the oxidation of 4-(trimethylamino)butanal and 4-guanidinobutanal to 4-trimethylammoniobutanoate and 4-guanidinobutanoate, respectively. Catalyzes the oxidation of betaine aldehyde to glycine betaine. This chain is Aminoaldehyde dehydrogenase 1b, found in Zea mays (Maize).